The chain runs to 116 residues: Large ribosomal subunit protein bL20c (116 aa).

This sequence belongs to the bacterial ribosomal protein bL20 family.

The protein resides in the plastid. It localises to the chloroplast. Binds directly to 23S ribosomal RNA and is necessary for the in vitro assembly process of the 50S ribosomal subunit. It is not involved in the protein synthesizing functions of that subunit. The chain is Large ribosomal subunit protein bL20c (rpl20) from Marchantia polymorpha (Common liverwort).